Consider the following 387-residue polypeptide: Fructose-1,6-bisphosphate aldolase/phosphatase (387 aa).

The Proton acceptor; for FBP phosphatase activity role is filled by aspartate 13. Positions 13, 20, 54, and 55 each coordinate Mg(2+). Histidine 20 lines the beta-D-fructose 1,6-bisphosphate pocket. Histidine 20 contributes to the dihydroxyacetone phosphate binding site. Tyrosine 92 is a binding site for beta-D-fructose 1,6-bisphosphate. A Mg(2+)-binding site is contributed by glutamine 96. 105-106 (GN) provides a ligand contact to beta-D-fructose 1,6-bisphosphate. Aspartate 133 contributes to the Mg(2+) binding site. Lysine 134 is a binding site for beta-D-fructose 1,6-bisphosphate. Position 134 (lysine 134) interacts with dihydroxyacetone phosphate. Catalysis depends on tyrosine 229, which acts as the Proton donor/acceptor; for FBP aldolase activity. Lysine 232, aspartate 233, and aspartate 234 together coordinate Mg(2+). Lysine 232 serves as the catalytic Schiff-base intermediate with DHAP; for FBP aldolase activity. Residues 242-243 (QS), arginine 266, aspartate 287, and tyrosine 348 each bind beta-D-fructose 1,6-bisphosphate. 2 residues coordinate dihydroxyacetone phosphate: arginine 266 and aspartate 287.

It belongs to the FBP aldolase/phosphatase family. As to quaternary structure, homooctamer; dimer of tetramers. Requires Mg(2+) as cofactor.

It catalyses the reaction beta-D-fructose 1,6-bisphosphate + H2O = beta-D-fructose 6-phosphate + phosphate. It carries out the reaction beta-D-fructose 1,6-bisphosphate = D-glyceraldehyde 3-phosphate + dihydroxyacetone phosphate. It participates in carbohydrate biosynthesis; gluconeogenesis. Catalyzes two subsequent steps in gluconeogenesis: the aldol condensation of dihydroxyacetone phosphate (DHAP) and glyceraldehyde-3-phosphate (GA3P) to fructose-1,6-bisphosphate (FBP), and the dephosphorylation of FBP to fructose-6-phosphate (F6P). The polypeptide is Fructose-1,6-bisphosphate aldolase/phosphatase (Ignicoccus hospitalis (strain KIN4/I / DSM 18386 / JCM 14125)).